The following is a 386-amino-acid chain: Alanine racemase 1 (386 aa).

Lys-38 acts as the Proton acceptor; specific for D-alanine in catalysis. Lys-38 bears the N6-(pyridoxal phosphate)lysine mark. Arg-136 provides a ligand contact to substrate. Tyr-267 (proton acceptor; specific for L-alanine) is an active-site residue. A substrate-binding site is contributed by Met-315.

It belongs to the alanine racemase family. Pyridoxal 5'-phosphate is required as a cofactor.

It carries out the reaction L-alanine = D-alanine. The protein operates within amino-acid biosynthesis; D-alanine biosynthesis; D-alanine from L-alanine: step 1/1. In terms of biological role, catalyzes the interconversion of L-alanine and D-alanine. May also act on other amino acids. The protein is Alanine racemase 1 (alr1) of Clostridium acetobutylicum (strain ATCC 824 / DSM 792 / JCM 1419 / IAM 19013 / LMG 5710 / NBRC 13948 / NRRL B-527 / VKM B-1787 / 2291 / W).